A 581-amino-acid chain; its full sequence is Protein GAMETOPHYTE DEFECTIVE 1 (581 aa).

The segment covering 452-467 (SMNIESTSEGGSMSPS) has biased composition (polar residues). Positions 452–512 (SMNIESTSEG…TTGHASNDEM (61 aa)) are disordered. The segment covering 496 to 512 (ENSKERATTGHASNDEM) has biased composition (basic and acidic residues).

This sequence belongs to the eukaryotic/archaeal RNase P protein component 3 family. In terms of assembly, probable component of nuclear RNase P and RNase MRP ribonucleoproteins. Interacts with POP5. As to expression, mostly expressed in inflorescence and roots, to a lower extent in leaves, and, at low levels, in siliques, seedlings and stems.

The protein localises to the nucleus. Its subcellular location is the nucleolus. It is found in the mitochondrion. Probable component of ribonuclease P, a ribonucleoprotein complex that generates mature tRNA molecules by cleaving their 5'-ends. May also be a component of the MRP ribonuclease complex, which cleaves pre-rRNA sequences. Required for female gametophyte development and male competence. In Arabidopsis thaliana (Mouse-ear cress), this protein is Protein GAMETOPHYTE DEFECTIVE 1.